We begin with the raw amino-acid sequence, 234 residues long: ATP synthase subunit a 2 (234 aa).

The next 5 helical transmembrane spans lie at 20–40, 78–98, 107–127, 169–189, and 194–214; these read ATLIFTWLVMGVLVVGSWFVT, YLPFIGTLFIFIALSNLLSVI, SLSTTTALALCVFFAVPLYGV, VMSGTMIVGILLSVAPLFFPV, and LGLLTGVIQAYIFAILAMVFI.

It belongs to the ATPase A chain family. In terms of assembly, F-type ATPases have 2 components, CF(1) - the catalytic core - and CF(0) - the membrane proton channel. CF(1) has five subunits: alpha(3), beta(3), gamma(1), delta(1), epsilon(1). CF(0) has four main subunits: a, b, b' and c.

It localises to the cellular thylakoid membrane. Key component of the proton channel; it plays a direct role in the translocation of protons across the membrane. The sequence is that of ATP synthase subunit a 2 from Acaryochloris marina (strain MBIC 11017).